The chain runs to 351 residues: Transcription factor Atoh1 (351 aa).

Disordered stretches follow at residues 16–39 (LGDH…PATL) and 89–116 (EAAA…SKSP). Positions 26–36 (HHVPPLTPQPP) are enriched in pro residues. The bHLH domain occupies 156–208 (QRRLAANARERRRMHGLNHAFDQLRNVIPSFNNDKKLSKYETLQMAQIYINAL). 2 disordered regions span residues 244 to 278 (GAGA…GPAS) and 308 to 351 (LSPS…DEAS). Over residues 247 to 256 (ASAVAGAQPA) the composition is skewed to low complexity. Positions 258 to 268 (GGGPRPTPPGP) are enriched in pro residues. Residues 332-351 (HRSDGEFSPHSHYSDSDEAS) are compositionally biased toward basic and acidic residues.

In terms of assembly, efficient DNA binding requires dimerization with another bHLH protein. In terms of tissue distribution, developing nervous system, and in adult epithelial cells of the gastrointestinal tract.

The protein resides in the nucleus. In terms of biological role, transcriptional regulator. Activates E box-dependent transcription in collaboration with TCF3/E47, but the activity is completely antagonized by the negative regulator of neurogenesis HES1. Plays a role in the differentiation of subsets of neural cells by activating E box-dependent transcription. This Mus musculus (Mouse) protein is Transcription factor Atoh1.